Reading from the N-terminus, the 360-residue chain is sn-glycerol-3-phosphate import ATP-binding protein UgpC (360 aa).

The ABC transporter domain occupies 4–235; that stretch reads LSLKGVKKSY…PATTFVASFI (232 aa). 37-44 lines the ATP pocket; sequence GPSGCGKS.

This sequence belongs to the ABC transporter superfamily. sn-glycerol-3-phosphate importer (TC 3.A.1.1.3) family. As to quaternary structure, the complex is composed of two ATP-binding proteins (UgpC), two transmembrane proteins (UgpA and UgpE) and a solute-binding protein (UgpB).

It localises to the cell inner membrane. The catalysed reaction is sn-glycerol 3-phosphate(out) + ATP + H2O = sn-glycerol 3-phosphate(in) + ADP + phosphate + H(+). In terms of biological role, part of the ABC transporter complex UgpBAEC involved in sn-glycerol-3-phosphate (G3P) import. Responsible for energy coupling to the transport system. This chain is sn-glycerol-3-phosphate import ATP-binding protein UgpC, found in Burkholderia mallei (strain ATCC 23344).